A 452-amino-acid chain; its full sequence is Metacaspase-1 (452 aa).

The disordered stretch occupies residues 1–97 (MYPGAGRPTY…GPPLQGRPRD (97 aa)). The segment covering 16–41 (QKGPYGQPQYQQQYAPPYPERYQQPY) has biased composition (low complexity). Residues H238 and C294 contribute to the active site.

The protein belongs to the peptidase C14B family.

Functionally, involved in cell death (apoptosis). The protein is Metacaspase-1 (MCA1) of Eremothecium gossypii (strain ATCC 10895 / CBS 109.51 / FGSC 9923 / NRRL Y-1056) (Yeast).